We begin with the raw amino-acid sequence, 541 residues long: Chaperonin GroEL 2 (541 aa).

Residues 29 to 32, 86 to 90, Gly-413, 476 to 478, and Asp-492 each bind ATP; these read TLGP, DGTTT, and NAA.

The protein belongs to the chaperonin (HSP60) family. Forms a cylinder of 14 subunits composed of two heptameric rings stacked back-to-back. Interacts with the co-chaperonin GroES.

The protein resides in the secreted. It is found in the capsule. It localises to the cell surface. Its subcellular location is the cell wall. The enzyme catalyses ATP + H2O + a folded polypeptide = ADP + phosphate + an unfolded polypeptide.. Together with its co-chaperonin GroES, plays an essential role in assisting protein folding. The GroEL-GroES system forms a nano-cage that allows encapsulation of the non-native substrate proteins and provides a physical environment optimized to promote and accelerate protein folding. The protein is Chaperonin GroEL 2 of Mycobacterium sp. (strain KMS).